The chain runs to 239 residues: Large ribosomal subunit protein uL2 (239 aa).

The interval 203–239 (PFGGKEHHPGKPTTTSRRAPPGRKVGHIAARRTGRRK) is disordered. Residues 222-239 (PPGRKVGHIAARRTGRRK) show a composition bias toward basic residues.

Belongs to the universal ribosomal protein uL2 family. In terms of assembly, part of the 50S ribosomal subunit. Forms a bridge to the 30S subunit in the 70S ribosome.

One of the primary rRNA binding proteins. Required for association of the 30S and 50S subunits to form the 70S ribosome, for tRNA binding and peptide bond formation. It has been suggested to have peptidyltransferase activity; this is somewhat controversial. Makes several contacts with the 16S rRNA in the 70S ribosome. The sequence is that of Large ribosomal subunit protein uL2 from Pyrococcus abyssi (strain GE5 / Orsay).